Here is a 313-residue protein sequence, read N- to C-terminus: Beta-ketoacyl-[acyl-carrier-protein] synthase III (313 aa).

Catalysis depends on residues C112 and H238. The interval 239–243 (QANIR) is ACP-binding. The active site involves N268.

This sequence belongs to the thiolase-like superfamily. FabH family. As to quaternary structure, homodimer.

The protein localises to the cytoplasm. The enzyme catalyses malonyl-[ACP] + acetyl-CoA + H(+) = 3-oxobutanoyl-[ACP] + CO2 + CoA. The protein operates within lipid metabolism; fatty acid biosynthesis. Its function is as follows. Catalyzes the condensation reaction of fatty acid synthesis by the addition to an acyl acceptor of two carbons from malonyl-ACP. Catalyzes the first condensation reaction which initiates fatty acid synthesis and may therefore play a role in governing the total rate of fatty acid production. Possesses both acetoacetyl-ACP synthase and acetyl transacylase activities. Its substrate specificity determines the biosynthesis of branched-chain and/or straight-chain of fatty acids. The sequence is that of Beta-ketoacyl-[acyl-carrier-protein] synthase III from Staphylococcus epidermidis (strain ATCC 35984 / DSM 28319 / BCRC 17069 / CCUG 31568 / BM 3577 / RP62A).